A 661-amino-acid polypeptide reads, in one-letter code: 7-beta-hydroxy-3-oxochol-24-oyl-CoA 4-desaturase (661 aa).

Residue glutamine 104 participates in FMN binding. 168-171 (HCAH) contacts substrate. Tyrosine 173 acts as the Proton donor in catalysis. FMN contacts are provided by residues arginine 222, lysine 298, and 320-321 (GR). Cysteine 344, cysteine 347, cysteine 351, and cysteine 363 together coordinate [4Fe-4S] cluster. Positions 394, 413, 421, 431, and 458 each coordinate FAD.

In the N-terminal section; belongs to the NADH:flavin oxidoreductase/NADH oxidase family. In terms of assembly, homotrimer. The cofactor is FMN. It depends on FAD as a cofactor. [4Fe-4S] cluster is required as a cofactor.

It catalyses the reaction 7beta-hydroxy-3-oxochol-24-oyl-CoA + NAD(+) = 7beta-hydroxy-3-oxochol-4-en-24-oyl-CoA + NADH + H(+). It functions in the pathway lipid metabolism; bile acid degradation. Its activity is regulated as follows. Activity is inhibited by sulfhydryl-reactive compounds, acriflavine, o-phenanthroline and EDTA. Its function is as follows. NADH-dependent flavin oxidoreductase. Stereo-specific NAD(H)-dependent 3-oxo-delta4-cholenoic acid oxidoreductase involved in bile acid 7beta-dehydroxylation. This Clostridium scindens (strain JCM 10418 / VPI 12708) protein is 7-beta-hydroxy-3-oxochol-24-oyl-CoA 4-desaturase.